The chain runs to 173 residues: ATP synthase subunit b (173 aa).

A helical membrane pass occupies residues 15-35 (GVEWGTVIVQVLTFIVLLALL).

This sequence belongs to the ATPase B chain family. As to quaternary structure, F-type ATPases have 2 components, F(1) - the catalytic core - and F(0) - the membrane proton channel. F(1) has five subunits: alpha(3), beta(3), gamma(1), delta(1), epsilon(1). F(0) has three main subunits: a(1), b(2) and c(10-14). The alpha and beta chains form an alternating ring which encloses part of the gamma chain. F(1) is attached to F(0) by a central stalk formed by the gamma and epsilon chains, while a peripheral stalk is formed by the delta and b chains.

Its subcellular location is the cell membrane. Its function is as follows. F(1)F(0) ATP synthase produces ATP from ADP in the presence of a proton or sodium gradient. F-type ATPases consist of two structural domains, F(1) containing the extramembraneous catalytic core and F(0) containing the membrane proton channel, linked together by a central stalk and a peripheral stalk. During catalysis, ATP synthesis in the catalytic domain of F(1) is coupled via a rotary mechanism of the central stalk subunits to proton translocation. Component of the F(0) channel, it forms part of the peripheral stalk, linking F(1) to F(0). In Staphylococcus aureus (strain MSSA476), this protein is ATP synthase subunit b.